Here is an 82-residue protein sequence, read N- to C-terminus: Small ribosomal subunit protein bS16 (82 aa).

Belongs to the bacterial ribosomal protein bS16 family.

This chain is Small ribosomal subunit protein bS16, found in Clostridium botulinum (strain ATCC 19397 / Type A).